Here is a 348-residue protein sequence, read N- to C-terminus: Rhodopsin (348 aa).

Position 1 is an N-acetylmethionine (M1). The Extracellular segment spans residues 1–36; that stretch reads MNGTEGPNFYVPFSNATGVVRSPFEYPQYYLAEPWQ. N-linked (GlcNAc...) asparagine glycans are attached at residues N2 and N15. A helical membrane pass occupies residues 37-61; the sequence is FSMLAAYMFLLIVLGFPINFLTLYV. Residues 62–73 are Cytoplasmic-facing; the sequence is TVQHKKLRTPLN. Residues 74–96 form a helical membrane-spanning segment; the sequence is YILLNLAVADLFMVFGGFTTTLY. Over 97 to 110 the chain is Extracellular; sequence TSLHGYFVFGPTGC. Cysteines 110 and 187 form a disulfide. The chain crosses the membrane as a helical span at residues 111–133; that stretch reads NAEGFFATLGGEIALWSLVVLAI. A 'Ionic lock' involved in activated form stabilization motif is present at residues 134–136; the sequence is ERY. The Cytoplasmic segment spans residues 134 to 152; it reads ERYVVVCKPMSNFRFGENH. The helical transmembrane segment at 153 to 173 threads the bilayer; that stretch reads AIMGVAFTWVMALACAAPPLF. Topologically, residues 174 to 202 are extracellular; the sequence is GWSRYIPEGLQCSCGIDYYTLKPEVNNES. E201 provides a ligand contact to Zn(2+). Residues 203 to 224 traverse the membrane as a helical segment; the sequence is FVIYMFVVHFTIPMIVIFFCYG. Residues 225–252 lie on the Cytoplasmic side of the membrane; the sequence is QLVFTVKEARAQQQESATTQKAEKEVTR. Residues 253 to 274 traverse the membrane as a helical segment; the sequence is MVIIMVIAFLICWVPYASVAFY. Residues 275-286 lie on the Extracellular side of the membrane; sequence IFTHQGSNFGPI. Q279 is a Zn(2+) binding site. The chain crosses the membrane as a helical span at residues 287 to 308; it reads FMTIPAFFAKSASIYNPVIYIM. K296 bears the N6-(retinylidene)lysine mark. Topologically, residues 309–348 are cytoplasmic; sequence MNKQFRNCMLTTICCGKNPLGDDEASATVSKTETSQVAPA. 2 S-palmitoyl cysteine lipidation sites follow: C322 and C323. The interaction with SAG stretch occupies residues 330 to 348; the sequence is DDEASATVSKTETSQVAPA. S334 bears the Phosphoserine mark. A Phosphothreonine modification is found at T336. A Phosphoserine modification is found at S338. Phosphothreonine is present on residues T340 and T342. At S343 the chain carries Phosphoserine.

This sequence belongs to the G-protein coupled receptor 1 family. Opsin subfamily. In terms of assembly, homodimer. May form a complex composed of RHO, GRK1 and RCVRN in a Ca(2+)-dependent manner; RCVRN prevents the interaction between GRK1 and RHO. Interacts with GRK1. Interacts (phosphorylated form) with SAG. Interacts with GNAT1. Interacts with GNAT3. SAG and G-proteins compete for a common binding site. Interacts with PRCD; the interaction promotes PRCD stability. Forms a complex with ASAP1 and ARF4. Forms a complex with ASAP1, RAB11A, Rabin8/RAB3IP, ARF4 and RAB11FIP3; the complex regulates Golgi-to-cilia rhodopsin/RHO transport in photoreceptors. Phosphorylated on some or all of the serine and threonine residues present in the C-terminal region. Post-translationally, contains one covalently linked retinal chromophore. Upon light absorption, the covalently bound 11-cis-retinal is converted to all-trans-retinal. After hydrolysis of the Schiff base and release of the covalently bound all-trans-retinal, active rhodopsin is regenerated by binding of a fresh molecule of 11-cis-retinal.

It localises to the membrane. The protein localises to the cell projection. It is found in the cilium. The protein resides in the photoreceptor outer segment. Its function is as follows. Photoreceptor required for image-forming vision at low light intensity. Required for photoreceptor cell viability after birth. Light-induced isomerization of 11-cis to all-trans retinal triggers a conformational change that activates signaling via G-proteins. Subsequent receptor phosphorylation mediates displacement of the bound G-protein alpha subunit by the arrestin SAG and terminates signaling. In Macaca fascicularis (Crab-eating macaque), this protein is Rhodopsin (RHO).